Consider the following 411-residue polypeptide: Methylthioribose-1-phosphate isomerase (411 aa).

An N-acetylserine modification is found at Ser2. The Proton donor role is filled by Asp280. The residue at position 351 (Ser351) is a Phosphoserine.

Belongs to the eIF-2B alpha/beta/delta subunits family. MtnA subfamily. In terms of assembly, homodimer.

The protein localises to the cytoplasm. Its subcellular location is the nucleus. It catalyses the reaction 5-(methylsulfanyl)-alpha-D-ribose 1-phosphate = 5-(methylsulfanyl)-D-ribulose 1-phosphate. It functions in the pathway amino-acid biosynthesis; L-methionine biosynthesis via salvage pathway; L-methionine from S-methyl-5-thio-alpha-D-ribose 1-phosphate: step 1/6. Its function is as follows. Catalyzes the interconversion of methylthioribose-1-phosphate (MTR-1-P) into methylthioribulose-1-phosphate (MTRu-1-P). The chain is Methylthioribose-1-phosphate isomerase from Saccharomyces cerevisiae (strain JAY291) (Baker's yeast).